The sequence spans 786 residues: MLERTLRVLEYNKVKEQLLEHTASSLGRDKVKHLVPSTDFEEIVEMQDTTDEAAKVIRLKGSAPLGGITDIRSNVKRAKIGSMLSPNELLDIANTMYGSRNMKRFIEDMVDNGVELPILETHVAQIVSLYDLEKKITNCIGDGGEVVDSASDKLRGIRTQIRTAESRIREKLENMTRSSNAQKMLSDSIVTIRNERYVIPVKQEYRGVYGGIVHDQSASGQTLFIEPQVIVELNNALQEARVKEKQEIERILLMLTEEVAVEADIVLSNVEVVANLDFIFAKAFYAKRIKATKPIVNNERYMDLRQARHPLIDPEIIVPNNIMLGKDFTTIVITGPNTGGKTVTLKTVGICVLMAQSGLHIPVMDESEICVFKNIFADIGDEQSIEQSLSTFSSHMVNIVDILEKADFESLVLFDELGAGTDPQEGAALAISILDEVCNRGARVVATTHYPELKAYGYNREQVINASVEFDVNTLSPTYKLLIGVPGRSNAFEISKRLGLSDRVIDQARNHISTDTNKIENMIAKLEESQKNAERDWNEAEALRKQSEKLHRELQRQIIEFNEERDERLLKAQKEGEEKVEAAKKEAEGIIQELRQLRKAQLANVKDHELIEAKSRLEGAAPELVKKQKVNVKNTAPKQQLRAGDEVKVLTFGQKGQLLEKVSDTEWSVQIGILKMKVKESNMEYINTPKQTEKKAVATVKGRDYHVSLELDLRGERFENAMARVEKYLDDAQLASYPRVSIIHGKGTGALRQGVQDYLKKHRGVKTFRYGDMGEGGLGVTVVELK.

335–342 contributes to the ATP binding site; that stretch reads GPNTGGKT. The Smr domain occupies 711-786; that stretch reads LDLRGERFEN…GLGVTVVELK (76 aa).

Belongs to the DNA mismatch repair MutS family. MutS2 subfamily. As to quaternary structure, homodimer. Binds to stalled ribosomes, contacting rRNA.

Functionally, endonuclease that is involved in the suppression of homologous recombination and thus may have a key role in the control of bacterial genetic diversity. In terms of biological role, acts as a ribosome collision sensor, splitting the ribosome into its 2 subunits. Detects stalled/collided 70S ribosomes which it binds and splits by an ATP-hydrolysis driven conformational change. Acts upstream of the ribosome quality control system (RQC), a ribosome-associated complex that mediates the extraction of incompletely synthesized nascent chains from stalled ribosomes and their subsequent degradation. Probably generates substrates for RQC. In Bacillus thuringiensis (strain Al Hakam), this protein is Endonuclease MutS2.